We begin with the raw amino-acid sequence, 369 residues long: Aspartate beta-hydroxylase domain-containing protein 2 (369 aa).

Over Met-1–Thr-58 the chain is Cytoplasmic. The helical transmembrane segment at Thr-59–Gly-79 threads the bilayer. The Lumenal portion of the chain corresponds to Arg-80–Arg-369. An N-linked (GlcNAc...) asparagine glycan is attached at Asn-211. Trp-228 and Ser-272 together coordinate 2-oxoglutarate. His-283 serves as a coordination point for Fe cation. Residue Arg-292–His-294 participates in 2-oxoglutarate binding. His-328 serves as a coordination point for Fe cation. Arg-341 contributes to the 2-oxoglutarate binding site.

The protein belongs to the aspartyl/asparaginyl beta-hydroxylase family. Requires Fe cation as cofactor.

It is found in the membrane. Functionally, may function as 2-oxoglutarate-dependent dioxygenase. The polypeptide is Aspartate beta-hydroxylase domain-containing protein 2 (ASPHD2) (Homo sapiens (Human)).